The chain runs to 554 residues: Sesquiterpene synthase 14b (554 aa).

Residues Asp-305, Asp-309, Asp-449, and Glu-457 each coordinate Mg(2+). The DDXXD motif motif lies at 305 to 309 (DDLYD).

It belongs to the terpene synthase family. Tpsa subfamily. Mg(2+) is required as a cofactor. The cofactor is Mn(2+).

It carries out the reaction (2E,6E)-farnesyl diphosphate = (E)-gamma-bisabolene + diphosphate. It catalyses the reaction (2Z,6Z)-farnesyl diphosphate = (E)-gamma-bisabolene + diphosphate. The catalysed reaction is (2Z,6Z)-farnesyl diphosphate = (E)-alpha-bisabolene + diphosphate. The enzyme catalyses (2Z,6Z)-farnesyl diphosphate = (Z)-beta-farnesene + diphosphate. It carries out the reaction (2E,6E)-farnesyl diphosphate = (E)-beta-farnesene + diphosphate. It catalyses the reaction (2E,6E)-farnesyl diphosphate = (+)-thujopsene + diphosphate. The catalysed reaction is (2Z,6Z)-farnesyl diphosphate = (E)-beta-farnesene + diphosphate. The enzyme catalyses (2E,6E)-farnesyl diphosphate = (Z)-beta-farnesene + diphosphate. It carries out the reaction (2Z,6Z)-farnesyl diphosphate = beta-acoradiene + diphosphate. It catalyses the reaction (2Z,6Z)-farnesyl diphosphate = alpha-acoradiene + diphosphate. The catalysed reaction is (2Z,6Z)-farnesyl diphosphate = beta-bisabolene + diphosphate. The enzyme catalyses (2E,6E)-farnesyl diphosphate = (-)-alpha-cedrene + diphosphate. It carries out the reaction (2E,6E)-farnesyl diphosphate = beta-bisabolene + diphosphate. It catalyses the reaction (2E,6E)-farnesyl diphosphate = beta-acoradiene + diphosphate. The catalysed reaction is (2Z,6Z)-farnesyl diphosphate = (-)-alpha-cedrene + diphosphate. The enzyme catalyses (2E)-geranyl diphosphate = terpinolene + diphosphate. It carries out the reaction (2E)-geranyl diphosphate = limonene + diphosphate. It catalyses the reaction (2E)-geranyl diphosphate = beta-myrcene + diphosphate. Its pathway is secondary metabolite biosynthesis; terpenoid biosynthesis. In terms of biological role, sesquiterpene synthase involved in the biosynthesis of volatile compounds. Mediates the conversion of (2E,6E)-farnesyl diphosphate ((EE)-FPP) into (+)-thujopsene, beta-bisabolene, alpha-cederene, beta-acoradiene, (E)-gamma-bisabolene, (Z)-alpha-bisabolene, (Z)-beta-farnesene and (E)-beta-farnesene, and of (2Z,6Z)-farnesyl diphosphate ((ZZ)-FPP) into (E)-gamma-bisabolene, (E)-alpha-bisabolene, (E)-beta-farnesene, (Z)-beta-farnesene, beta-bisabolene, beta-acoradiene and alpha-acoradiene. Can act with a low efficiency as a monoterpene synthase with geranyl diphosphate (GPP) as substrate, thus producing beta-myrcene, limonene and terpinolene. The protein is Sesquiterpene synthase 14b of Solanum habrochaites (Wild tomato).